A 542-amino-acid chain; its full sequence is Chaperonin GroEL (542 aa).

Residues 29–32, K50, 86–90, G413, 477–479, and D493 each bind ATP; these read TLGP, DGTTT, and NAA.

It belongs to the chaperonin (HSP60) family. As to quaternary structure, forms a cylinder of 14 subunits composed of two heptameric rings stacked back-to-back. Interacts with the co-chaperonin GroES.

It localises to the cytoplasm. The enzyme catalyses ATP + H2O + a folded polypeptide = ADP + phosphate + an unfolded polypeptide.. Functionally, together with its co-chaperonin GroES, plays an essential role in assisting protein folding. The GroEL-GroES system forms a nano-cage that allows encapsulation of the non-native substrate proteins and provides a physical environment optimized to promote and accelerate protein folding. The protein is Chaperonin GroEL of Solibacter usitatus (strain Ellin6076).